The primary structure comprises 175 residues: ADP-ribosylation factor 6 (175 aa).

The N-myristoyl glycine moiety is linked to residue glycine 2. Lysine 3 carries the N6-myristoyl lysine lipid modification. GTP-binding positions include 23–28, 41–44, 63–67, 122–125, and 155–156; these read AAGKTT, TIPT, DVGGQ, NKQD, and CA.

Belongs to the small GTPase superfamily. Arf family. As to quaternary structure, interacts (when activated) with GGA1, GGA2 and GGA3; the interaction is required for proper subcellular location of GGA1, GGA2 and GGA3. Interacts with PIP5K1C. Interacts with USP6 (via Rab-GAP TBC domain). Interacts with RAB11FIP3 and RAB11FIP4. Interacts with HERC1. Interacts with ARHGAP21. Interacts with ASAP3; the interaction is stabilized by calcium ions. Interacts with NCS1/FREQ at the plasma membrane. Interacts with TBC1D24. Interacts with ECPAS. Interacts with MICALL1. Interacts with SPAG9 homodimers, forming heterotetramers. Interacts with CYTH3. Interacts with ASAP2. Interacts with UACA. Interacts with KIF23, forming heterodimers and heterotetramers. Interacts with C9orf72. Interacts (GTP-bound form) with TJAP1/PILT. Interacts with PRKAA2. Interacts with CD36 (when palmitoylated); this interaction mediates CD36 transport from the Golgi to the plasma membrane. Interacts with APBB1. (Microbial infection) Interacts with the V.cholerae enterotoxin subunit A1; this causes a conformation change so that the toxin can bind NAD and catalyze the ADP-ribosylation of Gs alpha. In terms of assembly, (Microbial infection) Interacts with EspG from enteropathogenic E.coli. As to quaternary structure, (Microbial infection) Identified in a complex with RAB1A and EspG from enteropathogenic E.coli. (Microbial infection) Interacts with human enterovirus 71 protein VP1. GTP-bound form is myristoylated on Lys-3 by NMT1 and NMT2, allowing ARF6 to remain on membranes during the GTPase cycle, thereby promoting its activity. GDP-bound inactive form is demyristoylated on Lys-3 by SIRT2 at early endosomes or endocytic recycling compartment to allow its efficient activation by a guanine exchange factor (GEF) after GDP release. In terms of tissue distribution, ubiquitous, with higher levels in heart, substantia nigra, and kidney.

It localises to the cytoplasm. It is found in the cytosol. The protein resides in the cell membrane. The protein localises to the endosome membrane. Its subcellular location is the recycling endosome membrane. It localises to the cell projection. It is found in the filopodium membrane. The protein resides in the ruffle. The protein localises to the cleavage furrow. Its subcellular location is the midbody. It localises to the midbody ring. It is found in the early endosome membrane. The protein resides in the golgi apparatus. The protein localises to the trans-Golgi network membrane. It carries out the reaction GTP + H2O = GDP + phosphate + H(+). Its activity is regulated as follows. Activation is generally mediated by a guanine exchange factor (GEF), while inactivation through hydrolysis of bound GTP is catalyzed by a GTPase activating protein (GAP). Activated by ASAP3. Inactivated by ACAP1 and ACAP2. Activated by NGF via NTRK1. Activated by PRKAA2 through its C-terminal regulatory domain. Its function is as follows. GTP-binding protein involved in protein trafficking that regulates endocytic recycling and cytoskeleton remodeling. GTP-bound form plays an important role in the transport of multiple palmitoylated proteins form the Golgi to the plasma membrane. Required for normal completion of mitotic cytokinesis. Plays a role in the reorganization of the actin cytoskeleton and the formation of stress fibers. Involved in the regulation of dendritic spine development, contributing to the regulation of dendritic branching and filopodia extension. Potentiates the neurite outgrowth in primary neurons by interacting with the molecular adapter APBB1. Plays an important role in membrane trafficking, during junctional remodeling and epithelial polarization. Regulates surface levels of adherens junction proteins such as CDH1. Required for NTRK1 sorting to the recycling pathway from early endosomes. (Microbial infection) Functions as an allosteric activator of the cholera toxin catalytic subunit, an ADP-ribosyltransferase. In terms of biological role, (Microbial infection) Plays a key role in the endocytosis of enterovirus 71 and thus viral entry into brain microvascular endothelial cells. The sequence is that of ADP-ribosylation factor 6 from Homo sapiens (Human).